Here is a 209-residue protein sequence, read N- to C-terminus: Chaperone protein TorD (209 aa).

It belongs to the TorD/DmsD family. TorD subfamily.

It localises to the cytoplasm. Functionally, involved in the biogenesis of TorA. Acts on TorA before the insertion of the molybdenum cofactor and, as a result, probably favors a conformation of the apoenzyme that is competent for acquiring the cofactor. This is Chaperone protein TorD from Shewanella sp. (strain ANA-3).